Here is a 213-residue protein sequence, read N- to C-terminus: GTP cyclohydrolase 1 (213 aa).

Residues C104, H107, and C175 each coordinate Zn(2+).

The protein belongs to the GTP cyclohydrolase I family. As to quaternary structure, homomer.

The enzyme catalyses GTP + H2O = 7,8-dihydroneopterin 3'-triphosphate + formate + H(+). Its pathway is cofactor biosynthesis; 7,8-dihydroneopterin triphosphate biosynthesis; 7,8-dihydroneopterin triphosphate from GTP: step 1/1. The sequence is that of GTP cyclohydrolase 1 from Brucella suis (strain ATCC 23445 / NCTC 10510).